The chain runs to 147 residues: UPF0306 protein YE0465 (147 aa).

Belongs to the UPF0306 family.

The protein is UPF0306 protein YE0465 of Yersinia enterocolitica serotype O:8 / biotype 1B (strain NCTC 13174 / 8081).